A 358-amino-acid polypeptide reads, in one-letter code: Chorismate synthase (358 aa).

R46 serves as a coordination point for NADP(+). FMN is bound by residues 123–125 (RSS), 235–236 (NA), G275, 290–294 (KPTPS), and R316.

This sequence belongs to the chorismate synthase family. Homotetramer. Requires FMNH2 as cofactor.

It carries out the reaction 5-O-(1-carboxyvinyl)-3-phosphoshikimate = chorismate + phosphate. It participates in metabolic intermediate biosynthesis; chorismate biosynthesis; chorismate from D-erythrose 4-phosphate and phosphoenolpyruvate: step 7/7. In terms of biological role, catalyzes the anti-1,4-elimination of the C-3 phosphate and the C-6 proR hydrogen from 5-enolpyruvylshikimate-3-phosphate (EPSP) to yield chorismate, which is the branch point compound that serves as the starting substrate for the three terminal pathways of aromatic amino acid biosynthesis. This reaction introduces a second double bond into the aromatic ring system. This Helicobacter hepaticus (strain ATCC 51449 / 3B1) protein is Chorismate synthase.